The chain runs to 160 residues: Transcription elongation factor GreA (160 aa).

The stretch at 8-28 (LTEEGLKQLEAELEHLIQVKR) forms a coiled coil.

Belongs to the GreA/GreB family.

Its function is as follows. Necessary for efficient RNA polymerase transcription elongation past template-encoded arresting sites. The arresting sites in DNA have the property of trapping a certain fraction of elongating RNA polymerases that pass through, resulting in locked ternary complexes. Cleavage of the nascent transcript by cleavage factors such as GreA or GreB allows the resumption of elongation from the new 3'terminus. GreA releases sequences of 2 to 3 nucleotides. The sequence is that of Transcription elongation factor GreA from Mycoplasma pneumoniae (strain ATCC 29342 / M129 / Subtype 1) (Mycoplasmoides pneumoniae).